Reading from the N-terminus, the 342-residue chain is Ribosomal RNA small subunit methyltransferase C (342 aa).

This sequence belongs to the methyltransferase superfamily. RsmC family. In terms of assembly, monomer.

Its subcellular location is the cytoplasm. The catalysed reaction is guanosine(1207) in 16S rRNA + S-adenosyl-L-methionine = N(2)-methylguanosine(1207) in 16S rRNA + S-adenosyl-L-homocysteine + H(+). Its function is as follows. Specifically methylates the guanine in position 1207 of 16S rRNA in the 30S particle. In Salmonella typhi, this protein is Ribosomal RNA small subunit methyltransferase C.